The following is a 2313-amino-acid chain: MNKELIQINLPANIQNFKEIDLSLYYLRFWYKLNIRKTIVRIWTNRNNLIKLFDFQILSSFILRNLHSSRSQKKIFPLKYLFIITIPLFLYRINSRTLLQRENLVLTKLVNTTVRSSGVIQGISRESYTDLCYLPARVRKLPVCNTTNCTDIEWWKDWIVKDILPSWKISQRLINEVEMLLREKNISNLRHFFELYTFIFANHSSLAWRYDFNSFFVRKQNDRMNCDLGQQSDFLEKNHFFSSVMIAFCEKILFEAEDLSNKQEYKSNLDLIHSRFWIYTNQYHYMNLSQPLIVHYIRHLKDFRVREIFLNLFEDFVEFYSWAYYSANFSTWQRYEEKLGIIKDLVRQALISSDTVSSFDNTTAIQSLFAEILSQFSVYLLSRVQTSGQLTGLRIEKLRNMDLKMSKRDLFQNIGIITKNEDPKVFVSESSISNFTNDSYWSLNYYKYYLFNKWNWKQLLVPVESKMNIRYQTMGYPFSDTNYSIEYEKAYEAIGETAKSFIETLSPRDKRTLVNRNSKSISLSIVKPFHSNLWNKDMLPLHEHSLSVKSISEKIKLLEKQQYIDLRDDNFSDIFQIVDIWGRSRHYHSSRYCEVDNFLLRKRIGRAKSHVHELSSLISSIVNLPSSIFERAIKLCSSHQYLQFKILLLPRLNKIYLLLTKPNLGFVEIIKNDHCNNEEPDSVEDETILVKNTSINNIESFTKPNEMTDVEFDSTTNLLTKENIDYVQDTIKNDLFLMWNNMKDIMNISPISFLIKIDKHNDLTSLCSQYIVYIYQYVFIKSGGYLSKLRSQIKPWVNNDYFCCLMKQTIDRDLPNWENSLNRLNELIIQIDQIYVNVHNNLSIIEDWEDWDYFSNYVYLDPIYEKLNFFFNRLIGNILFEDKKAIKYYSKSLLLTDEVISNTLETLETFLPHLKYIKNFLFNHSSILEQFWHNRSDISRDLGSQVSNKLVLLLAHSKIPSNSIFSNIAKNGNILIEDLAYREIDKQNNWFNCFNARNRIPLKHSFDEKNAIFFLEHFANPQLNYNERLYFPKRKIFIKGYNRAYADIIINDLPRLINGFRSFIRRKGFCLEGTNFFQIKSHLFNKIPNKEYPHSILTQTIQILHRFYLIKEFGSSIQLKSLSTEQVNLFDLQERFLNSSSIRKQLVNIGVSDYWQPLLDSDPTNDFHLMNISTKDQLNQNGGSGSIIDEKSYHNDYLYSKFFGNLEEYDMLFRLKIPELSIHFIPDDSKIESLEKHIEFNQDIKNIYVDKNIFRSNLLMRFNERLRVINILELLRVSTIAKKWLFFHEYIPWFFTIEWWKYINSAVPNTFSETLLNISDQWISNLYYITNNIKNSITYLWVNLEFKLKAYSFDNKIYRFDSSIGVIYKEGCSSLRWSPLRLMSDSNVLYLTLIIPLLFSYIVFQHYLSIFTGFHSFSLWKRFEVFNYFLDPFNKIYIEKVLSFFPPARQKSIKPSLVDYLKRFFIYLTYGSSKRKVDVLLSYGKSLDIFREENNLVVHYLITNRILSQDGFHFHLNSNNMLNSNIKEFSSKLGLNYLQYLANIYKTNLSNFPISQLDLVERCLFFTFWQNIISPGIPGQFHILQNTPIPLQLGSSFPSKGILLIGSMETGRSYLIKSLAANYCLPLIQIPINKLLDKKVHFESKSVVLFPGESVRRLTLTFELVKRMSPCIVWIQDIHELNLDRVMNELEVDPKYLFCSLLKCLSNNSSNYYVRNNIIIAPTHIPSKVDPSFISPNRLDQLINIRRLNIHQREREFLALLRVKGFYYKGDLSHLGELGSITRGYSKRDLTVLANGVLLLSITQKESFVCQNSMELALHRQVRALDNKSKNGLRYEMLFYRIGKAIIQNSLINMPYIDSLSINPKLLRKRFSFLSNWYLETSLAESTVKELTLLPYIMGCLAGIAARDSWFILERKQESLVTLDRISENDIQLAFGILESLLADFSGLEICGKNDHNSLLQQTNKQYFNRIQKVLFSENDETILKENTKSINPYLSGANRYFFLARSSCLSRISFLRSSIYESMELSSESNTSYKMKESNENLVQHTERDLDSTKKDQDQILKGKDEFAGYRRILRDYRERPIYTTLENQLDHLDQLDNASLLDPFLKSNMDKSFMQYEMQYYPSDKLVLFLGRRFIWNMAGSSFIRDNAAFQRNKLFAEGDEVKRLYIAYGAIKERRKRLSFNKYIKKIDSQESSQNLITKQEKRHFENVRTNQMIKSYFGIPRLLPTVYLYQSIFIENTQDRYNHLNLLNYRHSLSSSREGLIYMILLESYHYLLNLFLSNRIILEKMAIILLKNTLISSKEVEQILSKLK.

An ATP-binding site is contributed by 1606–1613 (GSMETGRS).

The protein belongs to the Ycf2 family.

The protein resides in the plastid. It localises to the chloroplast stroma. In terms of biological role, probable ATPase of unknown function. Its presence in a non-photosynthetic plant (Epifagus virginiana) and experiments in tobacco indicate that it has an essential function which is probably not related to photosynthesis. The polypeptide is Protein Ycf2 (Psilotum nudum (Whisk fern)).